A 177-amino-acid polypeptide reads, in one-letter code: Adenine phosphoribosyltransferase (177 aa).

Belongs to the purine/pyrimidine phosphoribosyltransferase family. Homodimer.

It is found in the cytoplasm. It catalyses the reaction AMP + diphosphate = 5-phospho-alpha-D-ribose 1-diphosphate + adenine. It functions in the pathway purine metabolism; AMP biosynthesis via salvage pathway; AMP from adenine: step 1/1. Catalyzes a salvage reaction resulting in the formation of AMP, that is energically less costly than de novo synthesis. The polypeptide is Adenine phosphoribosyltransferase (Cutibacterium acnes (strain DSM 16379 / KPA171202) (Propionibacterium acnes)).